The following is a 207-amino-acid chain: Outer-membrane lipoprotein carrier protein (207 aa).

The N-terminal stretch at 1–21 (MRLIRMLLATALTFSVIPAHA) is a signal peptide.

The protein belongs to the LolA family. Monomer.

It localises to the periplasm. Participates in the translocation of lipoproteins from the inner membrane to the outer membrane. Only forms a complex with a lipoprotein if the residue after the N-terminal Cys is not an aspartate (The Asp acts as a targeting signal to indicate that the lipoprotein should stay in the inner membrane). The polypeptide is Outer-membrane lipoprotein carrier protein (Pseudomonas syringae pv. tomato (strain ATCC BAA-871 / DC3000)).